The chain runs to 105 residues: Pyrimidine/purine nucleoside phosphorylase (105 aa).

The protein belongs to the nucleoside phosphorylase PpnP family.

The enzyme catalyses a purine D-ribonucleoside + phosphate = a purine nucleobase + alpha-D-ribose 1-phosphate. It catalyses the reaction adenosine + phosphate = alpha-D-ribose 1-phosphate + adenine. It carries out the reaction cytidine + phosphate = cytosine + alpha-D-ribose 1-phosphate. The catalysed reaction is guanosine + phosphate = alpha-D-ribose 1-phosphate + guanine. The enzyme catalyses inosine + phosphate = alpha-D-ribose 1-phosphate + hypoxanthine. It catalyses the reaction thymidine + phosphate = 2-deoxy-alpha-D-ribose 1-phosphate + thymine. It carries out the reaction uridine + phosphate = alpha-D-ribose 1-phosphate + uracil. The catalysed reaction is xanthosine + phosphate = alpha-D-ribose 1-phosphate + xanthine. Its function is as follows. Catalyzes the phosphorolysis of diverse nucleosides, yielding D-ribose 1-phosphate and the respective free bases. Can use uridine, adenosine, guanosine, cytidine, thymidine, inosine and xanthosine as substrates. Also catalyzes the reverse reactions. The sequence is that of Pyrimidine/purine nucleoside phosphorylase from Cupriavidus taiwanensis (strain DSM 17343 / BCRC 17206 / CCUG 44338 / CIP 107171 / LMG 19424 / R1) (Ralstonia taiwanensis (strain LMG 19424)).